Consider the following 402-residue polypeptide: Putative cystathionine beta-lyase (402 aa).

Residue Lys236 is modified to N6-(pyridoxal phosphate)lysine.

It belongs to the class-II pyridoxal-phosphate-dependent aminotransferase family. MalY/PatB cystathionine beta-lyase subfamily. It depends on pyridoxal 5'-phosphate as a cofactor.

It catalyses the reaction L,L-cystathionine + H2O = L-homocysteine + pyruvate + NH4(+). The enzyme catalyses an S-substituted L-cysteine + H2O = a thiol + pyruvate + NH4(+). The protein operates within amino-acid biosynthesis; L-methionine biosynthesis via de novo pathway; L-homocysteine from L-cystathionine: step 1/1. This is Putative cystathionine beta-lyase from Mycobacterium leprae (strain TN).